A 239-amino-acid polypeptide reads, in one-letter code: MEKAFDMNMIGDFVPTLTAYLPVTLYILTLSLLFGFVLGLFLALPRIYNIPIVNQLAKVYISFFRGTPIMVQLFIVFYGIPALTGLIGIDTSKMDPFYAAVATYALSNAAAAAEIIRAGVGSVDKGQTEAAYSIGLSGSQAFRRIVLPQALVQAFPNMGNMVISSLKDTSLAFSIGVMDMSGRGQTLITSSNHSLEVYIALSIVYYAVAVLFEWFFRVAEKRIKKNQTRIVTVFDMNIH.

Residues 21–216 (LPVTLYILTL…AVAVLFEWFF (196 aa)) form the ABC transmembrane type-1 domain. Helical transmembrane passes span 25–45 (LYILTLSLLFGFVLGLFLALP), 69–89 (IMVQLFIVFYGIPALTGLIGI), 96–116 (PFYAAVATYALSNAAAAAEII), and 196–216 (EVYIALSIVYYAVAVLFEWFF).

This sequence belongs to the binding-protein-dependent transport system permease family. In terms of assembly, the complex is composed of two ATP-binding proteins (TcyN), two transmembrane proteins (TcyL and TcyM) and two solute-binding proteins (TcyJ and TcyK).

The protein resides in the cell membrane. In terms of biological role, part of the ABC transporter complex TcyJKLMN involved in L-cystine import. Probably responsible for the translocation of the substrate across the membrane. Is also involved in cystathionine, djenkolate, and S-methylcysteine transport. The sequence is that of L-cystine transport system permease protein TcyL (tcyL) from Bacillus subtilis (strain 168).